The chain runs to 89 residues: Small ribosomal subunit protein uS15 (89 aa).

A compositionally biased stretch (basic and acidic residues) spans 1 to 21 (MALTTEEKKQVLSEYGLHETD). The segment at 1-24 (MALTTEEKKQVLSEYGLHETDTGS) is disordered.

The protein belongs to the universal ribosomal protein uS15 family. Part of the 30S ribosomal subunit. Forms a bridge to the 50S subunit in the 70S ribosome, contacting the 23S rRNA.

Its function is as follows. One of the primary rRNA binding proteins, it binds directly to 16S rRNA where it helps nucleate assembly of the platform of the 30S subunit by binding and bridging several RNA helices of the 16S rRNA. Forms an intersubunit bridge (bridge B4) with the 23S rRNA of the 50S subunit in the ribosome. The chain is Small ribosomal subunit protein uS15 from Rhodococcus opacus (strain B4).